Reading from the N-terminus, the 123-residue chain is Large ribosomal subunit protein uL14 (123 aa).

Belongs to the universal ribosomal protein uL14 family. Part of the 50S ribosomal subunit. Forms a cluster with proteins L3 and L19. In the 70S ribosome, L14 and L19 interact and together make contacts with the 16S rRNA in bridges B5 and B8.

Its function is as follows. Binds to 23S rRNA. Forms part of two intersubunit bridges in the 70S ribosome. This is Large ribosomal subunit protein uL14 from Erwinia tasmaniensis (strain DSM 17950 / CFBP 7177 / CIP 109463 / NCPPB 4357 / Et1/99).